The sequence spans 352 residues: DNA polymerase IV (352 aa).

In terms of domain architecture, UmuC spans 6 to 186 (IIHIDMDAFY…LPLGKIPGVG (181 aa)). Aspartate 10 and aspartate 104 together coordinate Mg(2+). Residue glutamate 105 is part of the active site.

The protein belongs to the DNA polymerase type-Y family. Monomer. Requires Mg(2+) as cofactor.

The protein localises to the cytoplasm. The catalysed reaction is DNA(n) + a 2'-deoxyribonucleoside 5'-triphosphate = DNA(n+1) + diphosphate. Poorly processive, error-prone DNA polymerase involved in untargeted mutagenesis. Copies undamaged DNA at stalled replication forks, which arise in vivo from mismatched or misaligned primer ends. These misaligned primers can be extended by PolIV. Exhibits no 3'-5' exonuclease (proofreading) activity. May be involved in translesional synthesis, in conjunction with the beta clamp from PolIII. This is DNA polymerase IV from Neisseria meningitidis serogroup A / serotype 4A (strain DSM 15465 / Z2491).